The primary structure comprises 303 residues: Glucosyl-3-phosphoglycerate synthase (303 aa).

Residues 35-39, S66, K99, and 119-120 each bind UDP-alpha-D-glucose; these read PALNE and DS. Position 121 (D121) interacts with Mn(2+). A (2R)-3-phosphoglycerate-binding site is contributed by 166 to 169; that stretch reads GRVT. UDP-alpha-D-glucose-binding positions include 211-214 and 238-243; these read YGVE and RAHRNR. H240 is a Mn(2+) binding site. N242 is a binding site for (2R)-3-phosphoglycerate.

The protein belongs to the glycosyltransferase 2 family. As to quaternary structure, homotrimer. It depends on Mg(2+) as a cofactor. Mn(2+) is required as a cofactor.

The enzyme catalyses an NDP-alpha-D-glucose + (2R)-3-phosphoglycerate = (2R)-2-O-(alpha-D-glucopyranosyl)-3-phospho-glycerate + a ribonucleoside 5'-diphosphate + H(+). It carries out the reaction (2R)-3-phosphoglycerate + UDP-alpha-D-glucose = (2R)-2-O-(alpha-D-glucopyranosyl)-3-phospho-glycerate + UDP + H(+). The catalysed reaction is ADP-alpha-D-glucose + (2R)-3-phosphoglycerate = (2R)-2-O-(alpha-D-glucopyranosyl)-3-phospho-glycerate + ADP + H(+). It catalyses the reaction GDP-D-glucose + (2R)-3-phosphoglycerate = (2R)-2-O-(alpha-D-glucopyranosyl)-3-phospho-glycerate + GDP + H(+). Its function is as follows. Involved in the biosynthesis of 6-O-methylglucose lipopolysaccarides (MGLPs). Catalyzes the transfer of the glucose moiety from a nuleotide sugar such as UDP-alpha-D-glucose to the position 2 of 3-phospho-D-glycerate (3-PGA) to form glucosyl-3-phosphoglycerate (GPG). It can use UDP-glucose, ADP-glucose and GDP-glucose as sugar donor substrates with decreasing affinity and with 3-PGA as an acceptor. D-glycerate can only be an acceptor with ADP-glucose and at a very low rate. The sequence is that of Glucosyl-3-phosphoglycerate synthase (gpgS) from Mycolicibacterium smegmatis (strain ATCC 700084 / mc(2)155) (Mycobacterium smegmatis).